Here is a 597-residue protein sequence, read N- to C-terminus: Elongation factor 4 (597 aa).

Residues 2 to 184 (KHIRNFSIIA…TIVKSIPAPE (183 aa)) form the tr-type G domain. GTP contacts are provided by residues 14-19 (DHGKST) and 131-134 (NKID).

It belongs to the TRAFAC class translation factor GTPase superfamily. Classic translation factor GTPase family. LepA subfamily.

Its subcellular location is the cell inner membrane. The enzyme catalyses GTP + H2O = GDP + phosphate + H(+). Functionally, required for accurate and efficient protein synthesis under certain stress conditions. May act as a fidelity factor of the translation reaction, by catalyzing a one-codon backward translocation of tRNAs on improperly translocated ribosomes. Back-translocation proceeds from a post-translocation (POST) complex to a pre-translocation (PRE) complex, thus giving elongation factor G a second chance to translocate the tRNAs correctly. Binds to ribosomes in a GTP-dependent manner. This Aliivibrio fischeri (strain ATCC 700601 / ES114) (Vibrio fischeri) protein is Elongation factor 4.